Reading from the N-terminus, the 488-residue chain is BRAP2 RING ZnF UBP domain-containing protein 1 (488 aa).

Residues 174-214 (CPICLERLDPDTSGIVSTLCDHSFQCSCTSKWTYLSCQVCR) form an RING-type; degenerate zinc finger. The UBP-type; degenerate zinc finger occupies 208-301 (LSCQVCRLCQ…GKSVEMSTSC (94 aa)). Zn(2+)-binding residues include cysteine 225, cysteine 228, cysteine 237, cysteine 240, cysteine 245, histidine 252, histidine 256, and histidine 262. Residues 370–418 (EQIVVNTMQELQNKIEKCEEEKSGITEVNTKLIKEQDTWRKKAKEIEER) adopt a coiled-coil conformation. Positions 453-488 (MSSDTDGIREGTVLPVPISPEPVSSVRRQKKSNRRK) are disordered. Low complexity predominate over residues 465–478 (VLPVPISPEPVSSV). Residues 479–488 (RRQKKSNRRK) show a composition bias toward basic residues.

In terms of assembly, component of the heteromeric E3 ligase complex made of BRIZ1 and BRIZ2. Forms heterooligomers with BRIZ2 via coiled-coil domains.

The enzyme catalyses S-ubiquitinyl-[E2 ubiquitin-conjugating enzyme]-L-cysteine + [acceptor protein]-L-lysine = [E2 ubiquitin-conjugating enzyme]-L-cysteine + N(6)-ubiquitinyl-[acceptor protein]-L-lysine.. It functions in the pathway protein modification; protein ubiquitination. Functionally, RING-type ubiquitin E3 ligase required for seed germination and post-germination growth. In Arabidopsis thaliana (Mouse-ear cress), this protein is BRAP2 RING ZnF UBP domain-containing protein 1.